Here is a 187-residue protein sequence, read N- to C-terminus: RNA pyrophosphohydrolase (187 aa).

The region spanning 6–149 (GYRANVGIIL…KRQVYRQALT (144 aa)) is the Nudix hydrolase domain. The Nudix box signature appears at 38–59 (GGIKSGETPTEAMYRELAEETG). The segment at 166 to 187 (AYREPLEPVEKNRKKSSDTRQS) is disordered.

Belongs to the Nudix hydrolase family. RppH subfamily. It depends on a divalent metal cation as a cofactor.

Functionally, accelerates the degradation of transcripts by removing pyrophosphate from the 5'-end of triphosphorylated RNA, leading to a more labile monophosphorylated state that can stimulate subsequent ribonuclease cleavage. This chain is RNA pyrophosphohydrolase, found in Nitrosomonas europaea (strain ATCC 19718 / CIP 103999 / KCTC 2705 / NBRC 14298).